A 253-amino-acid chain; its full sequence is Indole-3-glycerol phosphate synthase (253 aa).

The protein belongs to the TrpC family.

It carries out the reaction 1-(2-carboxyphenylamino)-1-deoxy-D-ribulose 5-phosphate + H(+) = (1S,2R)-1-C-(indol-3-yl)glycerol 3-phosphate + CO2 + H2O. Its pathway is amino-acid biosynthesis; L-tryptophan biosynthesis; L-tryptophan from chorismate: step 4/5. The sequence is that of Indole-3-glycerol phosphate synthase from Bacillus cereus (strain G9842).